Consider the following 139-residue polypeptide: MIIGIGSDLIDIRRIENSLQRFGERFVNRCFTDIEIAKSDARKNRAASYAKRFAAKEACSKALGTGLAQGVFWKDMGVVNMPGGKPTMQLTGGAAARLQEMLPVGHRAAIHLTITDDFPLAQAFVIIEALPVAPAEGTV.

The Mg(2+) site is built by Asp-8 and Glu-57.

This sequence belongs to the P-Pant transferase superfamily. AcpS family. The cofactor is Mg(2+).

It is found in the cytoplasm. The catalysed reaction is apo-[ACP] + CoA = holo-[ACP] + adenosine 3',5'-bisphosphate + H(+). In terms of biological role, transfers the 4'-phosphopantetheine moiety from coenzyme A to a Ser of acyl-carrier-protein. This chain is Holo-[acyl-carrier-protein] synthase, found in Sinorhizobium fredii (strain NBRC 101917 / NGR234).